We begin with the raw amino-acid sequence, 452 residues long: GTPase Der (452 aa).

EngA-type G domains are found at residues 4–169 (PIVA…PPPE) and 177–352 (IKVA…EEHR). GTP-binding positions include 10-17 (GRPNVGKS), 57-61 (DTGGL), 120-123 (NKCE), 183-190 (GRPNVGKS), 230-234 (DTAGI), and 295-298 (NKWD). The KH-like domain maps to 353–438 (RRVTTAVINE…PIRLLWRGKK (86 aa)).

This sequence belongs to the TRAFAC class TrmE-Era-EngA-EngB-Septin-like GTPase superfamily. EngA (Der) GTPase family. In terms of assembly, associates with the 50S ribosomal subunit.

In terms of biological role, GTPase that plays an essential role in the late steps of ribosome biogenesis. The polypeptide is GTPase Der (Rippkaea orientalis (strain PCC 8801 / RF-1) (Cyanothece sp. (strain PCC 8801))).